The primary structure comprises 475 residues: Putative F-box protein At1g46840 (475 aa).

Residues 25–71 (TYVLEKLHIDLVIEILSRLSAKSIAICRCVSKQWNSLLVSQDFVESF) enclose the F-box domain. Residues 423–433 (SSYSTTRSYKS) show a composition bias toward low complexity. Residues 423-475 (SSYSTTRSYKSSGKRCSDRSIGEDEQDDIGEKRGDQAAERRERSTKRGKHEVH) are disordered. A compositionally biased stretch (basic and acidic residues) spans 451-464 (IGEKRGDQAAERRE). Over residues 465 to 475 (RSTKRGKHEVH) the composition is skewed to basic residues.

This chain is Putative F-box protein At1g46840, found in Arabidopsis thaliana (Mouse-ear cress).